The following is a 497-amino-acid chain: Cytochrome P450 71A16 (497 aa).

Residues 1 to 21 (MEMMILISLCLTTFLTILLFF) form a helical membrane-spanning segment. A heme-binding site is contributed by Cys-439.

The protein belongs to the cytochrome P450 family. Heme is required as a cofactor.

It is found in the membrane. In terms of biological role, possesses triterpene oxidizing activity. Catalyzes the C23 hydroxylation of marneral to form 23-hydroxymarneral. Catalyzes the C23 hydroxylation of marnerol to form 23-hydroxymarnerol. The polypeptide is Cytochrome P450 71A16 (CYP71A16) (Arabidopsis thaliana (Mouse-ear cress)).